Consider the following 383-residue polypeptide: Succinyl-diaminopimelate desuccinylase (383 aa).

Residue histidine 74 participates in Zn(2+) binding. The active site involves aspartate 76. Aspartate 107 contacts Zn(2+). The active-site Proton acceptor is the glutamate 141. The Zn(2+) site is built by glutamate 142, glutamate 170, and histidine 356.

This sequence belongs to the peptidase M20A family. DapE subfamily. As to quaternary structure, homodimer. The cofactor is Zn(2+). It depends on Co(2+) as a cofactor.

The catalysed reaction is N-succinyl-(2S,6S)-2,6-diaminopimelate + H2O = (2S,6S)-2,6-diaminopimelate + succinate. It participates in amino-acid biosynthesis; L-lysine biosynthesis via DAP pathway; LL-2,6-diaminopimelate from (S)-tetrahydrodipicolinate (succinylase route): step 3/3. Its function is as follows. Catalyzes the hydrolysis of N-succinyl-L,L-diaminopimelic acid (SDAP), forming succinate and LL-2,6-diaminopimelate (DAP), an intermediate involved in the bacterial biosynthesis of lysine and meso-diaminopimelic acid, an essential component of bacterial cell walls. The sequence is that of Succinyl-diaminopimelate desuccinylase from Polynucleobacter necessarius subsp. necessarius (strain STIR1).